Here is a 240-residue protein sequence, read N- to C-terminus: Membrane-spanning 4-domains subfamily A member 7 (240 aa).

The Cytoplasmic portion of the chain corresponds to 1–47 (MLLQSQTMGVSHSFTPKGITIPQREKPGHMYQNEDYLQNGLPTETTV). A helical membrane pass occupies residues 48 to 68 (LGTVQILCCLLISSLGAILVF). The Extracellular portion of the chain corresponds to 69–83 (APYPSHFNPAISTTL). The helical transmembrane segment at 84-104 (MSGYPFLGALCFGITGSLSII) threads the bilayer. Topologically, residues 105–121 (SGKQSTKPFDLSSLTSN) are cytoplasmic. Residues 122–142 (AVSSVTAGAGLFLLADSMVAL) form a helical membrane-spanning segment. The Extracellular portion of the chain corresponds to 143 to 178 (RTASQHCGSEMDYLSSLPYSEYYYPIYEIKDCLLTS). A helical transmembrane segment spans residues 179-199 (VSLTGVLVVMLIFTVLELLLA). Residues 200–240 (AYSSVFWWKQLYSNNPGSSFSSTQSQDHIQQVKKSSSRSWI) are Cytoplasmic-facing. The disordered stretch occupies residues 218 to 240 (SFSSTQSQDHIQQVKKSSSRSWI).

The protein belongs to the MS4A family. Ubiquitous expression in normal tissues. Expression is more elevated in adult liver, lung, spleen, and heart than in their fetal counterparts, and is higher in normal tissues than in the cancerous tissue or cell lines. Low levels of expression were detected in the promonocytic stage, whereas high levels of expression were detected in mature monocytes.

Its subcellular location is the membrane. Functionally, may be involved in signal transduction as a component of a multimeric receptor complex. This is Membrane-spanning 4-domains subfamily A member 7 (MS4A7) from Homo sapiens (Human).